Here is a 620-residue protein sequence, read N- to C-terminus: Probable potassium transport system protein Kup (620 aa).

12 helical membrane passes run 8-28, 50-70, 102-122, 136-156, 168-188, 211-231, 246-266, 284-304, 336-356, 368-388, 393-413, and 415-435; these read VGLL…SPLY, VLSL…VILI, MLLG…TPAI, PDLK…LFAI, FGPV…ANIV, LMSF…EALY, WFSL…ALLI, MVMP…QAVI, IYVP…VIGF, IAVT…MALL, MALV…YFAA, and IIKV…SFTV.

It belongs to the HAK/KUP transporter (TC 2.A.72) family.

It is found in the cell inner membrane. It carries out the reaction K(+)(in) + H(+)(in) = K(+)(out) + H(+)(out). Functionally, transport of potassium into the cell. Likely operates as a K(+):H(+) symporter. The protein is Probable potassium transport system protein Kup of Rhodopseudomonas palustris (strain HaA2).